The chain runs to 318 residues: MSLQAITVTLNPAIDQTIQLDRLQPGAVHRASSVRNDAGGKGINVAACLADWGSQVAALGVLGVGNAGVFEALFRERGITDHCHRVAGDTRTNLKLVEAQVNETTDINLPGLQLGQAHLQGVADHLAPLLRAGLPVVLSGSLPAGLPEDSWAQLQAQASAAGARVLLDTSGAPLVAALAAAPVAMPYAVKPNRHELEAWTGHPLGDHAALTAAAHALIARGIQLVVISMGTEGALFVQRDQQLIARPPRLAQGSSVGAGDAMVAGLAAALLDDATELEQCARLATAFSMCRLESGDARRITPEGVRDAAAAVVIGAVP.

Residues 228–233 (SMGTEG) and 259–260 (GD) contribute to the ATP site. The active-site Proton acceptor is the D260.

The protein belongs to the carbohydrate kinase PfkB family.

It carries out the reaction beta-D-fructose 1-phosphate + ATP = beta-D-fructose 1,6-bisphosphate + ADP + H(+). Catalyzes the ATP-dependent phosphorylation of fructose-l-phosphate to fructose-l,6-bisphosphate. In Xanthomonas campestris pv. campestris (strain ATCC 33913 / DSM 3586 / NCPPB 528 / LMG 568 / P 25), this protein is 1-phosphofructokinase.